The chain runs to 553 residues: Tether containing UBX domain for GLUT4 (553 aa).

The residue at position 2 (A2) is an N-acetylalanine. Residues 182–202 are compositionally biased toward low complexity; that stretch reads PGSLGSSASAGQAAASAPLPL. The tract at residues 182-324 is disordered; sequence PGSLGSSASA…REPVDREPVV (143 aa). The residue at position 184 (S184) is a Phosphoserine. The segment covering 206–217 has biased composition (basic and acidic residues); that stretch reads ELSRGDLSRPED. Over residues 260–280 the composition is skewed to low complexity; sequence RPLTSSSAKLPKSLSSPGGPS. S275 is subject to Phosphoserine. Positions 296–324 are enriched in basic and acidic residues; it reads EQERERDPQQEQERERPVDREPVDREPVV. The segment at 317 to 380 is interaction with GLUT4; sequence PVDREPVVCH…LVTKAFREAQ (64 aa). The region spanning 386–462 is the UBX domain; it reads ERYPKVALRV…NLFPAALVHL (77 aa). Residues 499 to 536 are disordered; it reads GSPSPLPAPDPAPKSEPAAEEGALVPPEPIPGTAQPVK. Phosphoserine occurs at positions 500 and 502. Positions 502–512 are enriched in pro residues; that stretch reads SPLPAPDPAPK.

As to quaternary structure, interacts with GLUT4. Interacts with VCPKMT. Interacts with VCP. Ubiquitous. Highly expressed in testis, heart, skeletal muscle and pancreas.

The protein localises to the endomembrane system. It is found in the endoplasmic reticulum-Golgi intermediate compartment membrane. The protein resides in the cytoplasm. Its subcellular location is the nucleus. Functionally, tethering protein that sequesters GLUT4-containing vesicles in the cytoplasm in the absence of insulin. Modulates the amount of GLUT4 that is available at the cell surface. Enhances VCP methylation catalyzed by VCPKMT. This chain is Tether containing UBX domain for GLUT4 (ASPSCR1), found in Homo sapiens (Human).